The following is a 124-amino-acid chain: Protein S100-A16 (124 aa).

Positions Val-23–Ser-37 constitute an EF-hand 1; degenerate domain. One can recognise an EF-hand 2 domain in the interval Gly-54–Pro-89. The Ca(2+) site is built by Asp-67, Asn-69, Asp-71, Arg-73, and Glu-78. Positions Gln-97–Ser-124 are disordered.

Belongs to the S-100 family. In terms of assembly, homodimer. Interacts with TP53. In terms of tissue distribution, ubiquitous. Widely distributed throughout the adult brain and predominantly expressed within specific astrocyte populations. Expressed at high level in adipose tissues of obese animals.

It is found in the nucleus. The protein resides in the nucleolus. It localises to the cytoplasm. Its function is as follows. Calcium-binding protein. Binds one calcium ion per monomer. Can promote differentiation of adipocytes (in vitro). Overexpression in 3T3-L1 preadipocytes increases their proliferation, enhances adipogenesis and reduces insulin-stimulated glucose uptake. In Mus musculus (Mouse), this protein is Protein S100-A16.